A 267-amino-acid chain; its full sequence is Deoxyribose-phosphate aldolase (267 aa).

Residue D123 is the Proton donor/acceptor of the active site. K185 (schiff-base intermediate with acetaldehyde) is an active-site residue. Residue K217 is the Proton donor/acceptor of the active site.

It belongs to the DeoC/FbaB aldolase family. DeoC type 1 subfamily.

The protein localises to the cytoplasm. It catalyses the reaction 2-deoxy-D-ribose 5-phosphate = D-glyceraldehyde 3-phosphate + acetaldehyde. It participates in carbohydrate degradation; 2-deoxy-D-ribose 1-phosphate degradation; D-glyceraldehyde 3-phosphate and acetaldehyde from 2-deoxy-alpha-D-ribose 1-phosphate: step 2/2. Functionally, catalyzes a reversible aldol reaction between acetaldehyde and D-glyceraldehyde 3-phosphate to generate 2-deoxy-D-ribose 5-phosphate. In Coccidioides immitis (strain RS) (Valley fever fungus), this protein is Deoxyribose-phosphate aldolase.